Consider the following 266-residue polypeptide: Undecaprenyl-diphosphatase (266 aa).

8 consecutive transmembrane segments (helical) span residues methionine 1–valine 21, leucine 40–leucine 60, leucine 90–phenylalanine 110, leucine 113–threonine 133, leucine 145–isoleucine 165, phenylalanine 188–valine 208, proline 217–phenylalanine 237, and phenylalanine 245–methionine 265.

This sequence belongs to the UppP family.

The protein localises to the cell inner membrane. The enzyme catalyses di-trans,octa-cis-undecaprenyl diphosphate + H2O = di-trans,octa-cis-undecaprenyl phosphate + phosphate + H(+). Functionally, catalyzes the dephosphorylation of undecaprenyl diphosphate (UPP). Confers resistance to bacitracin. This Acaryochloris marina (strain MBIC 11017) protein is Undecaprenyl-diphosphatase.